The chain runs to 227 residues: Large ribosomal subunit protein uL3 (227 aa).

N5-methylglutamine is present on glutamine 154.

Belongs to the universal ribosomal protein uL3 family. Part of the 50S ribosomal subunit. Forms a cluster with proteins L14 and L19. Methylated by PrmB.

Its function is as follows. One of the primary rRNA binding proteins, it binds directly near the 3'-end of the 23S rRNA, where it nucleates assembly of the 50S subunit. This chain is Large ribosomal subunit protein uL3, found in Acidiphilium cryptum (strain JF-5).